Consider the following 94-residue polypeptide: CRISPR-associated endoribonuclease Cas2 (94 aa).

Position 11 (D11) interacts with Mg(2+).

Belongs to the CRISPR-associated endoribonuclease Cas2 protein family. In terms of assembly, homodimer, forms a heterotetramer with a Cas1 homodimer. The cofactor is Mg(2+).

CRISPR (clustered regularly interspaced short palindromic repeat), is an adaptive immune system that provides protection against mobile genetic elements (viruses, transposable elements and conjugative plasmids). CRISPR clusters contain sequences complementary to antecedent mobile elements and target invading nucleic acids. CRISPR clusters are transcribed and processed into CRISPR RNA (crRNA). Functions as a ssRNA-specific endoribonuclease. Involved in the integration of spacer DNA into the CRISPR cassette. The polypeptide is CRISPR-associated endoribonuclease Cas2 (Thermus thermophilus (strain ATCC 27634 / DSM 579 / HB8)).